We begin with the raw amino-acid sequence, 208 residues long: Probable GTP-binding protein EngB (208 aa).

The region spanning 22–195 (GLPEIALAGR…WHSIEEIFIA (174 aa)) is the EngB-type G domain. GTP-binding positions include 30–37 (GRSNVGKS), 57–61 (GKTRT), 75–78 (DLPG), 142–145 (TKSD), and 174–176 (ISS). Residues S37 and T59 each contribute to the Mg(2+) site.

This sequence belongs to the TRAFAC class TrmE-Era-EngA-EngB-Septin-like GTPase superfamily. EngB GTPase family. Mg(2+) serves as cofactor.

Its function is as follows. Necessary for normal cell division and for the maintenance of normal septation. The chain is Probable GTP-binding protein EngB from Alkaliphilus oremlandii (strain OhILAs) (Clostridium oremlandii (strain OhILAs)).